A 535-amino-acid chain; its full sequence is Ankyrin repeat domain-containing protein 34C (535 aa).

ANK repeat units lie at residues 10–39, 43–80, 84–114, and 118–147; these read TDGNSLLKAVWLGRLRLTRLLLEGGAYINE, KGETALMVACITKHVDQQSISKSKMVKYLLDNRADPNI, SGKTALIHACIRRAGGEVVSLLLENGADPSL, and TGASALVYAINADDKDALKHLLDACKAKGK. 2 disordered regions span residues 159-181 and 214-237; these read SGTKTTKQYLNVPPSPKVEDRHS and AGHPSSCNTSKAVNEPGSPTRKVS. The segment covering 216–225 has biased composition (polar residues); that stretch reads HPSSCNTSKA. The residue at position 301 (serine 301) is a Phosphoserine. Positions 381–444 are disordered; it reads DLDIQPGPDP…RRRPPHLLER (64 aa). Serine 447 is modified (phosphoserine).

It belongs to the ANKRD34 family.

The protein is Ankyrin repeat domain-containing protein 34C (ANKRD34C) of Homo sapiens (Human).